A 58-amino-acid chain; its full sequence is Potassium channel toxin alpha-KTx 16.6 (58 aa).

The signal sequence occupies residues 1 to 22 (MKILSVLLIALIICSINICSEA). 3 disulfide bridges follow: C29/C50, C35/C55, and C39/C57.

The protein belongs to the short scorpion toxin superfamily. Potassium channel inhibitor family. Alpha-KTx 16 subfamily. As to expression, expressed by the venom gland.

It localises to the secreted. Functionally, inhibits potassium channel. The sequence is that of Potassium channel toxin alpha-KTx 16.6 from Buthus israelis (Israeli scorpion).